A 323-amino-acid polypeptide reads, in one-letter code: tRNA dimethylallyltransferase (323 aa).

13 to 20 (GPTASGKT) contributes to the ATP binding site. 15–20 (TASGKT) is a binding site for substrate. Interaction with substrate tRNA regions lie at residues 42-45 (DSAL), 166-170 (QRIQR), 251-256 (RCVGYR), and 284-291 (KRQITWLR).

Belongs to the IPP transferase family. Monomer. The cofactor is Mg(2+).

It carries out the reaction adenosine(37) in tRNA + dimethylallyl diphosphate = N(6)-dimethylallyladenosine(37) in tRNA + diphosphate. In terms of biological role, catalyzes the transfer of a dimethylallyl group onto the adenine at position 37 in tRNAs that read codons beginning with uridine, leading to the formation of N6-(dimethylallyl)adenosine (i(6)A). The sequence is that of tRNA dimethylallyltransferase from Acidovorax sp. (strain JS42).